Here is a 262-residue protein sequence, read N- to C-terminus: uncharacterized protein (262 aa).

This is an uncharacterized protein from Mycobacterium tuberculosis (strain CDC 1551 / Oshkosh).